The primary structure comprises 178 residues: MNGFSTEEDSHDGPPAPPFFGQSCCLIEDAERCGRPAGNASFSKRIQKSISQRKLKLDIDKSVRHLYICDFHKNFIQSVRNKRKRKTSDDGGESPDHEVEVPEVDLFQLQVNTLRRYKRHYKIQTRPGLNKAQLAETVSRHFRNIPVNEKETLTYFIYMVKSSKSRLDQKSDSSKQVE.

2 cysteine pairs are disulfide-bonded: cysteine 24/cysteine 25 and cysteine 33/cysteine 69. The Atypical zinc-finger motif lies at 24-72 (CCLIEDAERCGRPAGNASFSKRIQKSISQRKLKLDIDKSVRHLYICDFH). The tract at residues 80–99 (RNKRKRKTSDDGGESPDHEV) is disordered. Residues 81–86 (NKRKRK) carry the Nuclear localization signal (NLS) motif. Residues 83-85 (RKR) form an important for DNA and phosphoinositide binding region.

The protein belongs to the SAP30 family. In terms of assembly, interacts with components of the histone deacetylase complex sin3a, hdac1 and hdac2. Binds histones and nucleosomes. As to expression, detected in embryos at 2dpf (at protein level). Widely expressed during embryogenesis and in adults.

The protein resides in the nucleus. It localises to the nucleolus. Functionally, functions as a transcription repressor, probably via its interaction with histone deacetylase complexes. Required for normal expression of numerous target genes. Involved in the functional recruitment of the class 1 Sin3-histone deacetylase complex (HDAC) to the nucleolus. Binds DNA, apparently without sequence-specificity, and bends bound double-stranded DNA. Binds phosphoinositol phosphates (phosphoinositol 3-phosphate, phosphoinositol 4-phosphate and phosphoinositol 5-phosphate) via the same basic sequence motif that mediates DNA binding and nuclear import. The protein is Histone deacetylase complex subunit SAP30L (sap30l) of Danio rerio (Zebrafish).